Reading from the N-terminus, the 168-residue chain is Putative defense protein 1 (168 aa).

The N-terminal stretch at 1 to 18 (MMFAYIVAVVSALALTSA) is a signal peptide. Residues 19–168 (FPTGAPRSAC…SAPVKILSHH (150 aa)) form the Reelin domain. C28 and C105 are disulfide-bonded.

It belongs to the insect defense protein family. In terms of tissue distribution, very highly expressed in midgut, and highly expressed in fat body, silk gland and epidermis.

Its subcellular location is the secreted. In terms of biological role, as this protein is expressed upon bacterial infection, it may have antimicrobial activity. The sequence is that of Putative defense protein 1 from Antheraea mylitta (Tasar silkworm).